The chain runs to 885 residues: Initiator protein NS1 (885 aa).

Positions 404-477 are disordered; the sequence is AEAGPSGTQP…GREDIFSGAP (74 aa). A compositionally biased stretch (polar residues) spans 409-423; sequence SGTQPVETAQQSPPT. Positions 452-465 are enriched in gly residues; sequence QAAGGSEMGAGGSA.

This sequence belongs to the parvoviruses initiator protein NS1 family. As to quaternary structure, homooligomer. The cofactor is Mg(2+).

Its subcellular location is the host nucleus. It carries out the reaction ATP + H2O = ADP + phosphate + H(+). Functionally, multifunctional protein which displays endonuclease and helicase activities required for initiating and directing viral DNA replication. Also plays a role in viral packaging and transactivation of several promoters. Binds site-specifically to 2-3 approximate tandem copies within the origins of replication (Ori), unwinds this hairpin region and nicks one DNA strand thereby initiating the rolling circle replication (RCR). This chain is Initiator protein NS1, found in Bombyx mori densovirus (BmDNV).